A 171-amino-acid chain; its full sequence is Small ribosomal subunit protein uS5 (171 aa).

One can recognise an S5 DRBM domain in the interval 15–78 (YEEKVVKIKR…EKAKKQLIRI (64 aa)).

It belongs to the universal ribosomal protein uS5 family. In terms of assembly, part of the 30S ribosomal subunit. Contacts proteins S4 and S8.

Its function is as follows. With S4 and S12 plays an important role in translational accuracy. In terms of biological role, located at the back of the 30S subunit body where it stabilizes the conformation of the head with respect to the body. The sequence is that of Small ribosomal subunit protein uS5 from Phytoplasma australiense.